Reading from the N-terminus, the 295-residue chain is Inward rectifier potassium channel Kirbac3.1 (295 aa).

Residues 1 to 47 are Cytoplasmic-facing; the sequence is MTGGMKPPARKPRILNSDGSSNITRLGLEKRGWLDDHYHDLLTVSWP. The chain crosses the membrane as a helical span at residues 48 to 69; that stretch reads VFITLITGLYLVTNALFALAYL. Residues 70–82 lie on the Extracellular side of the membrane; sequence ACGDVIENARPGS. The helical; Pore-forming intramembrane region spans 83 to 95; that stretch reads FTDAFFFSVQTMA. Positions 96 to 100 match the Selectivity filter motif; it reads TIGYG. A helical transmembrane segment spans residues 107-131; it reads PLANTLVTLEALCGMLGLAVAASLI. Residues 132 to 295 are Cytoplasmic-facing; sequence YARFTRPTAG…DLGKFHEIAQ (164 aa).

Belongs to the inward rectifier-type potassium channel (TC 1.A.2.1) family. KCNJ11 subfamily. As to quaternary structure, homotetramer.

It is found in the membrane. In terms of biological role, inward rectifier potassium channel that mediates potassium uptake into the cell. Inward rectifier potassium channels are characterized by a greater tendency to allow potassium to flow into the cell rather than out of it. The inward rectification may be achieved by the blockage of outward current by cytoplasmic divalent metal ions and polyamines. Complements an E.coli mutant that is defective in K(+) uptake. This is Inward rectifier potassium channel Kirbac3.1 from Paramagnetospirillum magnetotacticum (Aquaspirillum magnetotacticum).